A 59-amino-acid polypeptide reads, in one-letter code: Large ribosomal subunit protein uL30 (59 aa).

This sequence belongs to the universal ribosomal protein uL30 family. In terms of assembly, part of the 50S ribosomal subunit.

In Syntrophotalea carbinolica (strain DSM 2380 / NBRC 103641 / GraBd1) (Pelobacter carbinolicus), this protein is Large ribosomal subunit protein uL30.